A 118-amino-acid polypeptide reads, in one-letter code: UPF0102 protein Bcav_2532 (118 aa).

The protein belongs to the UPF0102 family.

The protein is UPF0102 protein Bcav_2532 of Beutenbergia cavernae (strain ATCC BAA-8 / DSM 12333 / CCUG 43141 / JCM 11478 / NBRC 16432 / NCIMB 13614 / HKI 0122).